Here is a 239-residue protein sequence, read N- to C-terminus: Ribosomal RNA small subunit methyltransferase G (239 aa).

S-adenosyl-L-methionine contacts are provided by residues Gly78, Phe83, 129 to 130 (AE), and Arg148.

The protein belongs to the methyltransferase superfamily. RNA methyltransferase RsmG family.

Its subcellular location is the cytoplasm. Its function is as follows. Specifically methylates the N7 position of a guanine in 16S rRNA. The sequence is that of Ribosomal RNA small subunit methyltransferase G from Clostridium perfringens (strain 13 / Type A).